The following is a 352-amino-acid chain: UDP-3-O-acylglucosamine N-acyltransferase (352 aa).

Catalysis depends on His244, which acts as the Proton acceptor.

It belongs to the transferase hexapeptide repeat family. LpxD subfamily. Homotrimer.

It carries out the reaction a UDP-3-O-[(3R)-3-hydroxyacyl]-alpha-D-glucosamine + a (3R)-hydroxyacyl-[ACP] = a UDP-2-N,3-O-bis[(3R)-3-hydroxyacyl]-alpha-D-glucosamine + holo-[ACP] + H(+). Its pathway is bacterial outer membrane biogenesis; LPS lipid A biosynthesis. Catalyzes the N-acylation of UDP-3-O-acylglucosamine using 3-hydroxyacyl-ACP as the acyl donor. Is involved in the biosynthesis of lipid A, a phosphorylated glycolipid that anchors the lipopolysaccharide to the outer membrane of the cell. The chain is UDP-3-O-acylglucosamine N-acyltransferase from Leptospira biflexa serovar Patoc (strain Patoc 1 / Ames).